The chain runs to 1370 residues: DNA-directed RNA polymerase subunit beta (1370 aa).

This sequence belongs to the RNA polymerase beta chain family. The RNAP catalytic core consists of 2 alpha, 1 beta, 1 beta' and 1 omega subunit. When a sigma factor is associated with the core the holoenzyme is formed, which can initiate transcription.

The catalysed reaction is RNA(n) + a ribonucleoside 5'-triphosphate = RNA(n+1) + diphosphate. In terms of biological role, DNA-dependent RNA polymerase catalyzes the transcription of DNA into RNA using the four ribonucleoside triphosphates as substrates. The protein is DNA-directed RNA polymerase subunit beta of Bordetella parapertussis (strain 12822 / ATCC BAA-587 / NCTC 13253).